Consider the following 401-residue polypeptide: 8-amino-7-oxononanoate synthase (401 aa).

Position 24 (R24) interacts with substrate. 111–112 (GF) lines the pyridoxal 5'-phosphate pocket. H137 lines the substrate pocket. Residues S183, H211, and T240 each coordinate pyridoxal 5'-phosphate. K243 carries the post-translational modification N6-(pyridoxal phosphate)lysine. T357 lines the substrate pocket.

This sequence belongs to the class-II pyridoxal-phosphate-dependent aminotransferase family. BioF subfamily. Homodimer. Pyridoxal 5'-phosphate is required as a cofactor.

The enzyme catalyses 6-carboxyhexanoyl-[ACP] + L-alanine + H(+) = (8S)-8-amino-7-oxononanoate + holo-[ACP] + CO2. It participates in cofactor biosynthesis; biotin biosynthesis. Its function is as follows. Catalyzes the decarboxylative condensation of pimeloyl-[acyl-carrier protein] and L-alanine to produce 8-amino-7-oxononanoate (AON), [acyl-carrier protein], and carbon dioxide. The sequence is that of 8-amino-7-oxononanoate synthase from Xanthomonas campestris pv. campestris (strain B100).